The primary structure comprises 425 residues: 2-oxoglutarate and iron-dependent oxygenase JMJD4 (425 aa).

The JmjC domain occupies 141-300 (SRAFPEQDVY…IMWCFLQDEL (160 aa)). 3 residues coordinate Fe cation: H188, D190, and H268.

This sequence belongs to the JMJD6 family. Fe(2+) serves as cofactor.

The protein resides in the cytoplasm. The catalysed reaction is L-lysyl-[protein] + 2-oxoglutarate + O2 = 4-hydroxy-L-lysyl-[protein] + succinate + CO2. In terms of biological role, catalyzes the 2-oxoglutarate and iron-dependent C4-lysyl hydroxylation of ETF1 at 'Lys-63' thereby promoting the translational termination efficiency of ETF1. The polypeptide is 2-oxoglutarate and iron-dependent oxygenase JMJD4 (JMJD4) (Gallus gallus (Chicken)).